The sequence spans 30 residues: GWRDWLKKGKEWIKAKGPGIVKAALKAAVQ.

Belongs to the ponericin-G family. In terms of tissue distribution, expressed by the venom gland.

It localises to the secreted. Functionally, shows a broad spectrum of activity against both Gram-positive and Gram-negative bacteria. Also has antimicrobial activity against S.cerevisiae. Has insecticidal and non-hemolytic activity. In Neoponera inversa (Ant), this protein is U1-poneritoxin-Ni3b.